A 441-amino-acid chain; its full sequence is Xylose isomerase (441 aa).

Catalysis depends on residues histidine 100 and aspartate 103. Residues glutamate 231, glutamate 267, histidine 270, aspartate 295, aspartate 306, aspartate 308, and aspartate 338 each contribute to the Mg(2+) site.

It belongs to the xylose isomerase family. In terms of assembly, homotetramer. It depends on Mg(2+) as a cofactor.

It localises to the cytoplasm. The enzyme catalyses alpha-D-xylose = alpha-D-xylulofuranose. The protein is Xylose isomerase of Paraburkholderia phymatum (strain DSM 17167 / CIP 108236 / LMG 21445 / STM815) (Burkholderia phymatum).